A 309-amino-acid chain; its full sequence is tRNA pseudouridine synthase B (309 aa).

Aspartate 39 functions as the Nucleophile in the catalytic mechanism.

The protein belongs to the pseudouridine synthase TruB family. Type 1 subfamily.

It carries out the reaction uridine(55) in tRNA = pseudouridine(55) in tRNA. Functionally, responsible for synthesis of pseudouridine from uracil-55 in the psi GC loop of transfer RNAs. The polypeptide is tRNA pseudouridine synthase B (Bacillus subtilis (strain 168)).